A 177-amino-acid chain; its full sequence is GTP-dependent dephospho-CoA kinase (177 aa).

Residues Gly25, Tyr31, Asp48, Val49, Val50, Asp67, Lys69, Glu124, and Asp147 each contribute to the GTP site.

Belongs to the GTP-dependent DPCK family. As to quaternary structure, monomer in solution.

It catalyses the reaction 3'-dephospho-CoA + GTP = GDP + CoA + H(+). It participates in cofactor biosynthesis; coenzyme A biosynthesis. Catalyzes the GTP-dependent phosphorylation of the 3'-hydroxyl group of dephosphocoenzyme A to form coenzyme A (CoA). Can also use UTP, with lower efficiency and has weak activity with ATP, but shows a strong preference for GTP as the phosphate donor. The protein is GTP-dependent dephospho-CoA kinase of Thermococcus kodakarensis (strain ATCC BAA-918 / JCM 12380 / KOD1) (Pyrococcus kodakaraensis (strain KOD1)).